The chain runs to 340 residues: Sterol-4-alpha-carboxylate 3-dehydrogenase erg26, decarboxylating (340 aa).

The Proton acceptor role is filled by Tyr144. Lys148 is an NAD(+) binding site.

The protein belongs to the 3-beta-HSD family. As to quaternary structure, heterotetramer of erg25, erg26, erg27 and erg28. Erg28 acts as a scaffold to tether erg27 and other 4,4-demethylation-related enzymes, forming a demethylation enzyme complex, in the endoplasmic reticulum.

It is found in the endoplasmic reticulum membrane. It catalyses the reaction 4beta-methylzymosterol-4alpha-carboxylate + NADP(+) = 3-dehydro-4-methylzymosterol + CO2 + NADPH. It participates in steroid biosynthesis; zymosterol biosynthesis; zymosterol from lanosterol: step 4/6. It functions in the pathway steroid metabolism; ergosterol biosynthesis. Its function is as follows. Sterol-4-alpha-carboxylate 3-dehydrogenase; part of the third module of ergosterol biosynthesis pathway that includes by the late steps of the pathway. Erg26 is a catalytic component of the C-4 demethylation complex that catalyzes the oxidative decarboxylation that results in a reduction of the 3-beta-hydroxy group at the C-3 carbon to an oxo group. The third module or late pathway involves the ergosterol synthesis itself through consecutive reactions that mainly occur in the endoplasmic reticulum (ER) membrane. Firstly, the squalene synthase erg9 catalyzes the condensation of 2 farnesyl pyrophosphate moieties to form squalene, which is the precursor of all steroids. Secondly, squalene is converted into lanosterol by the consecutive action of the squalene epoxidase erg1 and the lanosterol synthase erg7. The lanosterol 14-alpha-demethylase erg11/cyp1 catalyzes C14-demethylation of lanosterol to produce 4,4'-dimethyl cholesta-8,14,24-triene-3-beta-ol. In the next steps, a complex process involving various demethylation, reduction and desaturation reactions catalyzed by the C-14 reductase erg24 and the C-4 demethylation complex erg25-erg26-erg27 leads to the production of zymosterol. Erg28 likely functions in the C-4 demethylation complex reaction by tethering erg26 and Erg27 to the endoplasmic reticulum or to facilitate interaction between these proteins. Then, the sterol 24-C-methyltransferase erg6 catalyzes the methyl transfer from S-adenosyl-methionine to the C-24 of zymosterol to form fecosterol. The C-8 sterol isomerase erg2 catalyzes the reaction which results in unsaturation at C-7 in the B ring of sterols and thus converts fecosterol to episterol. The sterol-C5-desaturases erg31 and erg32 then catalyze the introduction of a C-5 double bond in the B ring to produce 5-dehydroepisterol. The C-22 sterol desaturase erg5 further converts 5-dehydroepisterol into ergosta-5,7,22,24(28)-tetraen-3beta-ol by forming the C-22(23) double bond in the sterol side chain. Finally, ergosta-5,7,22,24(28)-tetraen-3beta-ol is substrate of the C-24(28) sterol reductase erg4 to produce ergosterol. In the genus Schizosaccharomyces, a second route exists between lanosterol and fecosterol, via the methylation of lanosterol to eburicol by erg6, followed by C14-demethylation by erg11/cyp1 and C4-demethylation by the demethylation complex erg25-erg26-erg27. This is Sterol-4-alpha-carboxylate 3-dehydrogenase erg26, decarboxylating from Schizosaccharomyces pombe (strain 972 / ATCC 24843) (Fission yeast).